The following is a 258-amino-acid chain: Ribosomal RNA small subunit methyltransferase J (258 aa).

S-adenosyl-L-methionine is bound by residues 104-105 (RD), 120-121 (ER), and Asp175.

It belongs to the methyltransferase superfamily. RsmJ family.

It localises to the cytoplasm. The enzyme catalyses guanosine(1516) in 16S rRNA + S-adenosyl-L-methionine = N(2)-methylguanosine(1516) in 16S rRNA + S-adenosyl-L-homocysteine + H(+). Specifically methylates the guanosine in position 1516 of 16S rRNA. The polypeptide is Ribosomal RNA small subunit methyltransferase J (Chromobacterium violaceum (strain ATCC 12472 / DSM 30191 / JCM 1249 / CCUG 213 / NBRC 12614 / NCIMB 9131 / NCTC 9757 / MK)).